The sequence spans 266 residues: Large ribosomal subunit protein eL8 (266 aa).

Positions 104–130 (PETKQEKKQRLLARAEQKAAGKGDTPT) are enriched in basic and acidic residues. The disordered stretch occupies residues 104–135 (PETKQEKKQRLLARAEQKAAGKGDTPTKRPPV).

It belongs to the eukaryotic ribosomal protein eL8 family. Component of the large ribosomal subunit.

Its subcellular location is the cytoplasm. In terms of biological role, component of the large ribosomal subunit. The ribosome is a large ribonucleoprotein complex responsible for the synthesis of proteins in the cell. This Gallus gallus (Chicken) protein is Large ribosomal subunit protein eL8 (RPL7A).